We begin with the raw amino-acid sequence, 428 residues long: Keratin, type I cytoskeletal 18-A (428 aa).

The tract at residues 2 to 78 (SFRSQTSSTT…SVKGSGLFNN (77 aa)) is head. The segment at 79 to 114 (EKETMQILNDRLASYLETVRNLEQANSKLELQIRET) is coil 1A. Positions 79 to 390 (EKETMQILND…RLLDGEDFRL (312 aa)) constitute an IF rod domain. The interval 115 to 131 (LEKRGPTTQDYSAYEKV) is linker 1. The segment at 132–223 (VEDLKSQIYD…RSHQTDVEEL (92 aa)) is coil 1B. The segment at 224–247 (RKHISECGVQVDVDAPKGQDLSKI) is linker 12. The tract at residues 248-385 (MEEIRAQYET…IATYRRLLDG (138 aa)) is coil 2. A tail region spans residues 386-428 (EDFRLQDALAVQTTKVQKKITVTETVVDGKVVSQSSEVQEIKK).

The protein belongs to the intermediate filament family. As to quaternary structure, heterotetramer of two type I and two type II keratins. Keratin-18 associates with keratin-8. Phosphorylated. Post-translationally, proteolytically cleaved by caspases during epithelial cell apoptosis.

In terms of biological role, when phosphorylated, plays a role in filament reorganization. This chain is Keratin, type I cytoskeletal 18-A, found in Polypterus senegalus (Senegal bichir).